Reading from the N-terminus, the 181-residue chain is MSLFRTIPTPGDFAPLFRLLDDYDNHRSARGHASVQSFAPRFDVRESNEAYHLDGELPGIPQSNIDIEFTDPQTLVIKGRSEREYHSSSDDNKNDQADTENQARGESSEVAKTGEKQVSTKKAANKSRYWVSERSVGEFQRTFTFPTRVNQDDVKASLKDGILSLVVPKAVPPTAKKITIQ.

The sHSP domain occupies 33–181 (ASVQSFAPRF…PPTAKKITIQ (149 aa)). The span at 79–115 (GRSEREYHSSSDDNKNDQADTENQARGESSEVAKTGE) shows a compositional bias: basic and acidic residues. Positions 79–127 (GRSEREYHSSSDDNKNDQADTENQARGESSEVAKTGEKQVSTKKAANKS) are disordered.

Belongs to the small heat shock protein (HSP20) family.

The protein is 30 kDa heat shock protein (hsp30) of Emericella nidulans (strain FGSC A4 / ATCC 38163 / CBS 112.46 / NRRL 194 / M139) (Aspergillus nidulans).